A 1042-amino-acid chain; its full sequence is Protein phosphatase Slingshot homolog 1 (1042 aa).

Positions 1 to 12 are enriched in polar residues; the sequence is MALVTLQRSPTP. The segment at 1-29 is disordered; the sequence is MALVTLQRSPTPSAASSSASNSELEAGSD. Ala-2 is modified (N-acetylalanine). Over residues 13-22 the composition is skewed to low complexity; sequence SAASSSASNS. Phosphoserine occurs at positions 37 and 57. One can recognise a DEK-C domain in the interval 249–304; that stretch reads ERTERLIKAKLRSIMMSQDLENVTSKEIRNELEKQMNCNLKEFKEFIDNEMLLILG. The Tyrosine-protein phosphatase domain occupies 308–449; that stretch reads KPSLIFDHLY…LSEYEGILDA (142 aa). The active-site Phosphocysteine intermediate is Cys-393. Ser-516 is modified (phosphoserine). Disordered regions lie at residues 576–609, 668–766, 858–900, and 915–942; these read FGNSKPRSDSLPQVEELEKDGSPRTGRWRRASTQ, MERH…PHCD, IPEE…LDHT, and PTSSSISSNLTRSSSSDSIHSVRGKPGL. Residues 675–693 are compositionally biased toward polar residues; sequence SSSAICTQPTFLPHVTSSP. Low complexity predominate over residues 697–712; sequence ASSRSRAPERPASGPA. Positions 886 to 900 are enriched in polar residues; it reads LQKSPTSTLPRLDHT. Ser-889 carries the phosphoserine modification. Positions 889-1042 are interaction with YWHAG; it reads SPTSTLPRLD…LKSPSRVNKS (154 aa). The segment covering 917–935 has biased composition (low complexity); that stretch reads SSSISSNLTRSSSSDSIHS. Phosphoserine is present on Ser-970. Over residues 985 to 995 the composition is skewed to polar residues; the sequence is SSEADTSTIAD. The tract at residues 985 to 1042 is disordered; it reads SSEADTSTIADSQDAKCGLSSSFLPEPQSAPRDPAATSKSSGKSAPEHLKSPSRVNKS.

Belongs to the protein-tyrosine phosphatase family. As to quaternary structure, interacts with the 14-3-3 proteins YWHAB, YWHAG, YWHAQ, and YWHAZ. Interaction with 14-3-3 proteins inhibits phosphatase activity and also blocks recruitment to lamellipodia and stimulation by actin. Interacts with actin and this stimulates phosphatase activity. Interacts with LIMK1. In terms of processing, phosphorylated. Inhibitory phosphorylation by PAK4 promotes binding to YWHAZ. Phosphorylation at Ser-970 is decreased by stimuli which promote actin reorganization and lamellipodia formation. Can be dephosphorylated and activated by PPP3CA/calcineurin A. Phosphorylation decreases immediately prior to telophase. Expressed in brain, heart, kidney and thymus. Also expressed at lower levels in liver, skeletal muscle, small intestine and spleen.

It localises to the cytoplasm. Its subcellular location is the cytoskeleton. It is found in the cleavage furrow. The protein resides in the midbody. The catalysed reaction is O-phospho-L-tyrosyl-[protein] + H2O = L-tyrosyl-[protein] + phosphate. It catalyses the reaction O-phospho-L-seryl-[protein] + H2O = L-seryl-[protein] + phosphate. The enzyme catalyses O-phospho-L-threonyl-[protein] + H2O = L-threonyl-[protein] + phosphate. Protein phosphatase which regulates actin filament dynamics. Dephosphorylates and activates the actin binding/depolymerizing factor cofilin, which subsequently binds to actin filaments and stimulates their disassembly. Inhibitory phosphorylation of cofilin is mediated by LIMK1, which may also be dephosphorylated and inactivated by this protein. This chain is Protein phosphatase Slingshot homolog 1, found in Mus musculus (Mouse).